Here is a 303-residue protein sequence, read N- to C-terminus: UDP-N-acetylenolpyruvoylglucosamine reductase (303 aa).

Positions 28 to 195 (KTGGPAQYLA…ISATFGLEPG (168 aa)) constitute an FAD-binding PCMH-type domain. Arg-174 is an active-site residue. Ser-224 (proton donor) is an active-site residue. Residue Glu-294 is part of the active site.

The protein belongs to the MurB family. FAD serves as cofactor.

The protein localises to the cytoplasm. It carries out the reaction UDP-N-acetyl-alpha-D-muramate + NADP(+) = UDP-N-acetyl-3-O-(1-carboxyvinyl)-alpha-D-glucosamine + NADPH + H(+). Its pathway is cell wall biogenesis; peptidoglycan biosynthesis. Its function is as follows. Cell wall formation. This Lactobacillus gasseri (strain ATCC 33323 / DSM 20243 / BCRC 14619 / CIP 102991 / JCM 1131 / KCTC 3163 / NCIMB 11718 / NCTC 13722 / AM63) protein is UDP-N-acetylenolpyruvoylglucosamine reductase.